A 406-amino-acid chain; its full sequence is Terminal uridylyltransferase 7 (406 aa).

Residues 1–15 constitute a mitochondrion transit peptide; the sequence is MNVAKREFIRGMMAH. UTP-binding positions include serine 54 and 64-65; that span reads SD. Positions 65 and 67 each coordinate Mg(2+). Residues 138–142, lysine 164, lysine 168, and 181–183 each bind UTP; these read GVENS and NSF.

It belongs to the DNA polymerase type-B-like family. In terms of assembly, component of the mitochondrial RNA editing core complex-like (RECC-like), also known as the editosome-like complex; only a small proportion of MEAT1 associates with the complex. Interacts with RNA-editing ligase REL1. Requires Mg(2+) as cofactor.

It is found in the mitochondrion matrix. It catalyses the reaction RNA(n) + UTP = RNA(n)-3'-uridine ribonucleotide + diphosphate. In terms of biological role, terminal uridylyltransferase which, as part of the mitochondrial RNA editing core-like complex (RECC-like), is involved in the post-transcriptional editing of mitochondrial RNA, a process involving the addition and deletion of uridine (U) nucleotides in the pre-mRNA. Specifically, catalyzes the addition of U to single-stranded RNA with a preference for a 3'-terminal U and adds the number of Us specified by a guide RNA (gRNA) to precleaved double-stranded RNA editing substrates. Essential for insect and bloodstream developmental forms viability. This chain is Terminal uridylyltransferase 7, found in Trypanosoma brucei brucei.